Reading from the N-terminus, the 121-residue chain is Large ribosomal subunit protein bL21c (121 aa).

It belongs to the bacterial ribosomal protein bL21 family. In terms of assembly, part of the 50S ribosomal subunit.

The protein localises to the plastid. It localises to the chloroplast. In terms of biological role, this protein binds to 23S rRNA. This is Large ribosomal subunit protein bL21c from Chaetosphaeridium globosum (Charophycean green alga).